The following is a 338-amino-acid chain: UDP-3-O-acylglucosamine N-acyltransferase (338 aa).

Catalysis depends on histidine 239, which acts as the Proton acceptor.

It belongs to the transferase hexapeptide repeat family. LpxD subfamily. Homotrimer.

It carries out the reaction a UDP-3-O-[(3R)-3-hydroxyacyl]-alpha-D-glucosamine + a (3R)-hydroxyacyl-[ACP] = a UDP-2-N,3-O-bis[(3R)-3-hydroxyacyl]-alpha-D-glucosamine + holo-[ACP] + H(+). It functions in the pathway bacterial outer membrane biogenesis; LPS lipid A biosynthesis. Functionally, catalyzes the N-acylation of UDP-3-O-acylglucosamine using 3-hydroxyacyl-ACP as the acyl donor. Is involved in the biosynthesis of lipid A, a phosphorylated glycolipid that anchors the lipopolysaccharide to the outer membrane of the cell. This Xylella fastidiosa (strain M12) protein is UDP-3-O-acylglucosamine N-acyltransferase.